The following is a 554-amino-acid chain: MASSQVGDMVNGNAEPTRHLAKFPPSLWGDRFTSFTLDKQLWDKYGNEIEVLKEQVRSMVVAGGRKAAEQINLINVLERLGVSYHFEKEIEEQLEQLFAKFEDNEDYDLFTIALHFRIFRQHGYKMSCDVFNKFRDSNCEFKETVSNDVQGMLSLYEATYLKIRGEGFLDEAHAFTIAQLESLVEGPHLSSDLSEQVMHALKQSIHRGFPRLEAKHFISFYEKDASRNETLLRLAKLDFNQLQLSHREELCHIFRWWKELDLISKVPYARDRAVECFFWSTCAYYEPQHSVGRAGLTKIMLLLSVTDDTYDAYGTYNELKLYTNAVQRWDVSAMDELPDYMKALYRALLNVYDEVERDLAKQGRAYGVHHSKEAFKEIVRSYEIEAEWFKEGYVASFEEYMKNALVTSTGRLHTTSCFMGLEADVATTEAFEWILTKPKMVAASGAIGRLVDDVMSHDEEQERGHVATGLDCYMKQHGVSKQEAIVELYKMIENAWRDINEEMLKPTAISMKLLIRVLNLSRISDVVYKYVDGYTHPEIINDHVISLFEDPIPM.

Residues Asp-307 and Asp-311 each contribute to the Mg(2+) site. The DDXXD motif motif lies at 326 to 330 (VQRWD). Asp-452, Ser-456, and Glu-460 together coordinate Mg(2+).

This sequence belongs to the terpene synthase family. Mg(2+) is required as a cofactor.

It carries out the reaction (2E,6E)-farnesyl diphosphate + H2O = valerianol + diphosphate. It functions in the pathway secondary metabolite biosynthesis; terpenoid biosynthesis. Functionally, terpene synthase that catalyzes the biosynthesis of the terpene valerianol, which is a volatile compound of floral scent. The protein is Valerianol synthase TPS1F of Camellia hiemalis (Camellia).